Reading from the N-terminus, the 63-residue chain is UPF0337 protein Atu0782 (63 aa).

The interval 1–63 (MGSTSDKIAG…DAVKGAVDRM (63 aa)) is disordered. Basic and acidic residues predominate over residues 51 to 63 (KAKDAVKGAVDRM).

Belongs to the UPF0337 (CsbD) family.

The polypeptide is UPF0337 protein Atu0782 (Agrobacterium fabrum (strain C58 / ATCC 33970) (Agrobacterium tumefaciens (strain C58))).